The primary structure comprises 73 residues: uncharacterized protein (73 aa).

A helical transmembrane segment spans residues 37-57 (AIIITVAVVAFGALTLGAIGA).

It localises to the membrane. This is an uncharacterized protein from Natronomonas pharaonis (strain ATCC 35678 / DSM 2160 / CIP 103997 / JCM 8858 / NBRC 14720 / NCIMB 2260 / Gabara) (Halobacterium pharaonis).